The chain runs to 315 residues: Methionyl-tRNA formyltransferase (315 aa).

Residues 2 to 189 form an N-terminal domain region; sequence SDSLRIIFAG…LITTLKQLAD (188 aa). 113-116 serves as a coordination point for (6S)-5,6,7,8-tetrahydrofolate; sequence SLLP. The segment at 210-315 is C-terminal domain; it reads KEEARIDWSL…EWFIPGNRLA (106 aa).

It belongs to the Fmt family.

It catalyses the reaction L-methionyl-tRNA(fMet) + (6R)-10-formyltetrahydrofolate = N-formyl-L-methionyl-tRNA(fMet) + (6S)-5,6,7,8-tetrahydrofolate + H(+). Attaches a formyl group to the free amino group of methionyl-tRNA(fMet). The formyl group appears to play a dual role in the initiator identity of N-formylmethionyl-tRNA by promoting its recognition by IF2 and preventing the misappropriation of this tRNA by the elongation apparatus. In Salmonella typhi, this protein is Methionyl-tRNA formyltransferase.